A 357-amino-acid polypeptide reads, in one-letter code: Probable butyrate kinase (357 aa).

Belongs to the acetokinase family.

It localises to the cytoplasm. The enzyme catalyses butanoate + ATP = butanoyl phosphate + ADP. This Thermotoga petrophila (strain ATCC BAA-488 / DSM 13995 / JCM 10881 / RKU-1) protein is Probable butyrate kinase.